Here is a 155-residue protein sequence, read N- to C-terminus: Small ribosomal subunit protein uS7c (155 aa).

Belongs to the universal ribosomal protein uS7 family. As to quaternary structure, part of the 30S ribosomal subunit.

The protein localises to the plastid. The protein resides in the chloroplast. Functionally, one of the primary rRNA binding proteins, it binds directly to 16S rRNA where it nucleates assembly of the head domain of the 30S subunit. The protein is Small ribosomal subunit protein uS7c (rps7) of Schisandra chinensis (Chinese magnolia vine).